The chain runs to 428 residues: GTPase Obg (428 aa).

An Obg domain is found at 1 to 158 (MFVDQTKIDV…RTLRLELKVL (158 aa)). In terms of domain architecture, OBG-type G spans 159-328 (ADVGLVGFPS…LMGKTADLVE (170 aa)). Residues 165 to 172 (GFPSVGKS), 190 to 194 (FTTLT), 212 to 215 (DLPG), 282 to 285 (TQMD), and 309 to 311 (SSV) contribute to the GTP site. Positions 172 and 192 each coordinate Mg(2+). An OCT domain is found at 350–428 (YKKPEDDGFK…IADFTFEFVD (79 aa)).

Belongs to the TRAFAC class OBG-HflX-like GTPase superfamily. OBG GTPase family. In terms of assembly, monomer. Mg(2+) serves as cofactor.

Its subcellular location is the cytoplasm. In terms of biological role, an essential GTPase which binds GTP, GDP and possibly (p)ppGpp with moderate affinity, with high nucleotide exchange rates and a fairly low GTP hydrolysis rate. Plays a role in control of the cell cycle, stress response, ribosome biogenesis and in those bacteria that undergo differentiation, in morphogenesis control. This is GTPase Obg from Lactobacillus gasseri (strain ATCC 33323 / DSM 20243 / BCRC 14619 / CIP 102991 / JCM 1131 / KCTC 3163 / NCIMB 11718 / NCTC 13722 / AM63).